The following is a 153-amino-acid chain: LOB domain-containing protein 26 (153 aa).

One can recognise an LOB domain in the interval Asn-4–Leu-105. The segment at Lys-126 to Ser-153 is disordered. Basic and acidic residues predominate over residues Lys-140–Ser-153.

The protein belongs to the LOB domain-containing protein family.

The protein is LOB domain-containing protein 26 (LBD26) of Arabidopsis thaliana (Mouse-ear cress).